The following is a 204-amino-acid chain: Proteasome subunit beta 2 (204 aa).

The propeptide at 1–6 (MEVLPG) is removed in mature form; by autocatalysis. Thr-7 functions as the Nucleophile in the catalytic mechanism.

Belongs to the peptidase T1B family. The 20S proteasome core is composed of 14 alpha and 14 beta subunits that assemble into four stacked heptameric rings, resulting in a barrel-shaped structure. The two inner rings, each composed of seven catalytic beta subunits, are sandwiched by two outer rings, each composed of seven alpha subunits. The catalytic chamber with the active sites is on the inside of the barrel. Has a gated structure, the ends of the cylinder being occluded by the N-termini of the alpha-subunits. Is capped at one or both ends by the proteasome regulatory ATPase, PAN.

The protein localises to the cytoplasm. It carries out the reaction Cleavage of peptide bonds with very broad specificity.. Its activity is regulated as follows. The formation of the proteasomal ATPase PAN-20S proteasome complex, via the docking of the C-termini of PAN into the intersubunit pockets in the alpha-rings, triggers opening of the gate for substrate entry. Interconversion between the open-gate and close-gate conformations leads to a dynamic regulation of the 20S proteasome proteolysis activity. Component of the proteasome core, a large protease complex with broad specificity involved in protein degradation. This is Proteasome subunit beta 2 from Thermofilum pendens (strain DSM 2475 / Hrk 5).